Reading from the N-terminus, the 67-residue chain is Small ribosomal subunit protein eS17 (67 aa).

The protein belongs to the eukaryotic ribosomal protein eS17 family.

The chain is Small ribosomal subunit protein eS17 from Haloquadratum walsbyi (strain DSM 16790 / HBSQ001).